The primary structure comprises 210 residues: Cytochrome c4 (210 aa).

An N-terminal signal peptide occupies residues 1 to 20 (MNKVLVSLLLTLGITGMAHA). The heme c site is built by cysteine 34, cysteine 37, histidine 38, methionine 86, cysteine 139, cysteine 142, histidine 143, and methionine 187.

In terms of processing, binds 2 heme c groups covalently per subunit.

The protein localises to the periplasm. Diheme, high potential cytochrome c believed to be an intermediate electron donor to terminal oxidation systems. In Stutzerimonas stutzeri (Pseudomonas stutzeri), this protein is Cytochrome c4 (cc4).